The chain runs to 386 residues: Succinyl-diaminopimelate desuccinylase (386 aa).

H73 lines the Zn(2+) pocket. D75 is an active-site residue. Residue D106 participates in Zn(2+) binding. The active-site Proton acceptor is E140. Zn(2+)-binding residues include E141, E169, and H355.

It belongs to the peptidase M20A family. DapE subfamily. In terms of assembly, homodimer. Zn(2+) serves as cofactor. Requires Co(2+) as cofactor.

The enzyme catalyses N-succinyl-(2S,6S)-2,6-diaminopimelate + H2O = (2S,6S)-2,6-diaminopimelate + succinate. It functions in the pathway amino-acid biosynthesis; L-lysine biosynthesis via DAP pathway; LL-2,6-diaminopimelate from (S)-tetrahydrodipicolinate (succinylase route): step 3/3. In terms of biological role, catalyzes the hydrolysis of N-succinyl-L,L-diaminopimelic acid (SDAP), forming succinate and LL-2,6-diaminopimelate (DAP), an intermediate involved in the bacterial biosynthesis of lysine and meso-diaminopimelic acid, an essential component of bacterial cell walls. The chain is Succinyl-diaminopimelate desuccinylase from Delftia acidovorans (strain DSM 14801 / SPH-1).